Here is a 129-residue protein sequence, read N- to C-terminus: M-zodatoxin-Lt8h (129 aa).

The signal sequence occupies residues 1–20 (MKYFVVALALVAAFACIAES). Positions 21-60 (KPAESEHELAEVEEENELADLEDAVWLEDLADLSDLEETR) are excised as a propeptide.

This sequence belongs to the cationic peptide 06 (cytoinsectotoxin) family. As to expression, expressed by the venom gland.

It localises to the secreted. In terms of biological role, insecticidal, cytolytic and antimicrobial peptide. Has insecticidal activity against the flesh fly S.carnaria. Has antibacterial activity against the Gram-negative bacteria E.coli. Forms voltage-dependent, ion-permeable channels in membranes. At high concentration causes cell membrane lysis. The protein is M-zodatoxin-Lt8h (cit 1-11) of Lachesana tarabaevi (Spider).